We begin with the raw amino-acid sequence, 357 residues long: Ion-translocating oxidoreductase complex subunit D (357 aa).

A run of 3 helical transmembrane segments spans residues 35–55 (VWLY…TVLV), 88–108 (LPPW…VVLG), and 119–139 (LFNP…VEMT). Residue T176 is modified to FMN phosphoryl threonine. Helical transmembrane passes span 209–229 (APGS…VYLI), 233–253 (VIAW…ATVF), 261–281 (YADA…FFIA), 295–315 (AVFA…GGYP), and 316–336 (EATA…DHWI).

This sequence belongs to the NqrB/RnfD family. In terms of assembly, the complex is composed of six subunits: RnfA, RnfB, RnfC, RnfD, RnfE and RnfG. FMN is required as a cofactor.

The protein resides in the cell inner membrane. Its function is as follows. Part of a membrane-bound complex that couples electron transfer with translocation of ions across the membrane. This chain is Ion-translocating oxidoreductase complex subunit D, found in Halorhodospira halophila (strain DSM 244 / SL1) (Ectothiorhodospira halophila (strain DSM 244 / SL1)).